The sequence spans 495 residues: Cytochrome P450 monooxygenase FrzC (495 aa).

Residues 8-28 form a helical membrane-spanning segment; the sequence is GLVVGLWVTYHILLGTYNVFF. Residue Cys-437 coordinates heme.

Belongs to the cytochrome P450 family. Heme is required as a cofactor.

The protein localises to the membrane. It catalyses the reaction (S,S)-2,5-di-(p-hydroxybenzyl)piperazine + reduced [NADPH--hemoprotein reductase] + O2 = (1S,4S)-4-[(4-hydroxyphenyl)methyl]-2,5-diazaspiro[bicyclo[3.2.1]octane-6,1'-cyclohexane]-2',5'-dien-4'-one + oxidized [NADPH--hemoprotein reductase] + 2 H2O + H(+). It functions in the pathway secondary metabolite biosynthesis. Functionally, cytochrome P450 monooxygenase; part of the gene cluster that mediates the biosynthesis of the alkaloid (-)-FR901483, a potent immunosuppressant that shows efficacy in animal models and a probable inhibitor of purine nucleotide biosynthesis by targeting phosphoribosylpyrophosphate amidotransferase (PPAT). Within the pathway, FrzC catalyzes the coupling between N10 and C1' to produce a 1,4-diazabicyclo[3.2.1]octane spiro-fused to a 2,5-cyclohexadienone. FrzC probably first catalyzes homolysis of the N-H bond to generate the N10 radical which is followed by an O-H abstraction to give the phenolic radical which can be delocalized to C1'. Radical coupling between N10 and C1' then forms. The biosynthesis of (-)-FR901483 starts with the condensation of two L-tyrosines to yield (S,S)-dityrosyl-piperazine. This process occurs in 3 steps with the non-canonical nonribosomal peptide synthetase FrzA catalyzing the reduction of L-tyrosine into L-tyrosinal, the spontaneous condensation of 2 L-tyrosinal units, and the subsequent reduction by the NmrA-like family domain-containing oxidoreductase FrzB. The cytochrome P450 monooxygenase FrzC then performs coupling between N10 and C1' to morph the piperazine into a 1,4-diazabicyclo[3.2.1]octane spiro-fused to a 2,5-cyclohexadienone. The dienone portion is further reduced to cyclohexanone by the flavin-dependent reductase FrzD. The methyltranserases (MTs) FrzE and FrzF are then involved in the methylation at the C10' amine and the C4 phenolic oxygen, respectively. The order of the two MTs appear to be interchangeable. Cleavage of the C9-N10' bond by the dioxygenase FrzG then leads to formation of a conjugated iminium. In addition to the oxidation of C9, an additional dehydrogenation between C7 and C8 can occur to give a likely shunt product. The next biosynthetic step is the intramolecular aldol condensation catalyzed by the newly identified aldolase FrzH to yield an aza-tricyclic product with the formation of a C9-C3' bond. The short-chain dehydrogenase/reductase FrzI then produces dephospho-(-)-FR901483 that is phosphorylated at C4'-OH into (-)-FR901483 by the phosphotransferase FrzJ. This chain is Cytochrome P450 monooxygenase FrzC, found in Cladobotryum sp.